The following is a 132-amino-acid chain: MKSSGLFPFLVLLALGTLAPWAVEGSGKSFKAGVCPPKKSAQCLRYKKPECQSDWQCPGKKRCCPDTCGIKCLDPVDTPNPTRRKPGKCPVTYGQCLMLNPPNFCEMDGQCKRDLKCCMGMCGKSCVSPVKA.

Residues 1-25 (MKSSGLFPFLVLLALGTLAPWAVEG) form the signal peptide. 2 WAP domains span residues 28 to 76 (KSFK…LDPV) and 82 to 130 (TRRK…VSPV). Disulfide bonds link Cys35–Cys64, Cys43–Cys68, Cys51–Cys63, Cys57–Cys72, Cys89–Cys118, Cys96–Cys122, Cys105–Cys117, and Cys111–Cys126. The tract at residues 84–132 (RKPGKCPVTYGQCLMLNPPNFCEMDGQCKRDLKCCMGMCGKSCVSPVKA) is elastase inhibitory domain.

Interacts with GRN; interaction protects progranulin from proteolysis. In terms of tissue distribution, detected in blood plasma. Detected in bone marrow myeloid cells. Detected in airway sputum. Detected in parotid gland secretions. Detected in seminal plasma (at protein level). Detected in uterus cervix.

The protein resides in the secreted. In terms of biological role, acid-stable proteinase inhibitor with strong affinities for trypsin, chymotrypsin, elastase, and cathepsin G. Modulates the inflammatory and immune responses after bacterial infection, and after infection by the intracellular parasite L.major. Down-regulates responses to bacterial lipopolysaccharide (LPS). Plays a role in regulating the activation of NF-kappa-B and inflammatory responses. Has antimicrobial activity against mycobacteria, but not against salmonella. Contributes to normal resistance against infection by M.tuberculosis. Required for normal resistance to infection by L.major. Required for normal wound healing, probably by preventing tissue damage by limiting protease activity. Together with ELANE, required for normal differentiation and proliferation of bone marrow myeloid cells. The sequence is that of Antileukoproteinase (SLPI) from Homo sapiens (Human).